Reading from the N-terminus, the 1199-residue chain is DNA-directed RNA polymerase subunit beta (1199 aa).

The interval 1177–1199 (EQEEKKAKEAEQETAEKEETKTE) is disordered.

Belongs to the RNA polymerase beta chain family. In terms of assembly, the RNAP catalytic core consists of 2 alpha, 1 beta, 1 beta' and 1 omega subunit. When a sigma factor is associated with the core the holoenzyme is formed, which can initiate transcription.

It carries out the reaction RNA(n) + a ribonucleoside 5'-triphosphate = RNA(n+1) + diphosphate. Functionally, DNA-dependent RNA polymerase catalyzes the transcription of DNA into RNA using the four ribonucleoside triphosphates as substrates. The chain is DNA-directed RNA polymerase subunit beta from Ligilactobacillus salivarius (strain UCC118) (Lactobacillus salivarius).